We begin with the raw amino-acid sequence, 670 residues long: uncharacterized protein (670 aa).

The disordered stretch occupies residues 53 to 83 (PTAKPSDFPGDAVTGTQPVPREPSSLPRTTP). 27 tandem repeats follow at residues 143–158 (ATPAGANDTANITTAT), 171–186 (ATPAGANDTANITTAT), 200–214 (ATPAGANDTAVTTTP), 215–233 (ATPAGANDTANGTVVTTTP), 234–252 (AMPAGANDTANGTAVTTTP), 253–268 (AMPAGANDTANITTAT), 279–293 (TMPAGATDTVVTTTP), 294–309 (AMPTGANDTANITTAT), 320–334 (TMPAGATDTVVTTTP), 335–349 (AMPAGANDTANVTKP), 362–376 (AMPTGATDTVVTTTP), 377–391 (AMPTGATDTVVTTTP), 392–406 (AMPTGATDTVVTTTP), 407–421 (AKPAGANGTVVTTTP), 422–436 (AMPAGANDTVVTTAP), 437–452 (ATPAGANDTANVTKPT), 464–477 (VKPTGATGTVTTTT), 478–493 (AKPTGANDTANVTKPT), 504–517 (AKPTGATGTVTVAT), 518–531 (AKPTGATGTVTTTT), 532–545 (AKPTGANGTVTTTT), 546–559 (AKPTGATGTVTTTT), 560–573 (AKPTGANGTVTTTT), 574–587 (AKPAGANGTVTTTT), 588–601 (AKPAGANGTVTTTT), 602–615 (AKPAGANGTVTTTT), and 616–629 (AKPAGANGTVTTTT). The segment at 187–225 (PAGANDTAVTTTSATPAGANDTAVTTTPATPAGANDTAN) is disordered. Low complexity predominate over residues 205-225 (ANDTAVTTTPATPAGANDTAN). A disordered region spans residues 339-395 (GANDTANVTKPAGSTDTVVTTTPAMPTGATDTVVTTTPAMPTGATDTVVTTTPAMPT). Residues 342-362 (DTANVTKPAGSTDTVVTTTPA) are compositionally biased toward polar residues. Over residues 363–395 (MPTGATDTVVTTTPAMPTGATDTVVTTTPAMPT) the composition is skewed to low complexity. 2 stretches are compositionally biased toward low complexity: residues 471–482 (GTVTTTTAKPTG) and 490–503 (TKPTGATGTVTTTT). Residues 471–503 (GTVTTTTAKPTGANDTANVTKPTGATGTVTTTT) form a disordered region. The span at 525-634 (GTVTTTTAKP…VTTTTAKPAG (110 aa)) shows a compositional bias: low complexity. The disordered stretch occupies residues 525-670 (GTVTTTTAKP…GHKPKSGARR (146 aa)). Residues 638-654 (GHGHGHGHGHGHGHGHG) show a composition bias toward basic residues.

This is an uncharacterized protein from Ictalurid herpesvirus 1 (strain Auburn) (IcHV-1).